A 361-amino-acid chain; its full sequence is Queuine tRNA-ribosyltransferase (361 aa).

Catalysis depends on Asp92, which acts as the Proton acceptor. Substrate-binding positions include 92–96 (DSGGF), Asp146, Gln189, and Gly216. The segment at 247–253 (GVGKPSD) is RNA binding. The Nucleophile role is filled by Asp266. The interval 271–275 (TRSGR) is RNA binding; important for wobble base 34 recognition. 4 residues coordinate Zn(2+): Cys304, Cys306, Cys309, and His335.

Belongs to the queuine tRNA-ribosyltransferase family. Homodimer. Within each dimer, one monomer is responsible for RNA recognition and catalysis, while the other monomer binds to the replacement base PreQ1. It depends on Zn(2+) as a cofactor.

It catalyses the reaction 7-aminomethyl-7-carbaguanine + guanosine(34) in tRNA = 7-aminomethyl-7-carbaguanosine(34) in tRNA + guanine. It functions in the pathway tRNA modification; tRNA-queuosine biosynthesis. Its function is as follows. Catalyzes the base-exchange of a guanine (G) residue with the queuine precursor 7-aminomethyl-7-deazaguanine (PreQ1) at position 34 (anticodon wobble position) in tRNAs with GU(N) anticodons (tRNA-Asp, -Asn, -His and -Tyr). Catalysis occurs through a double-displacement mechanism. The nucleophile active site attacks the C1' of nucleotide 34 to detach the guanine base from the RNA, forming a covalent enzyme-RNA intermediate. The proton acceptor active site deprotonates the incoming PreQ1, allowing a nucleophilic attack on the C1' of the ribose to form the product. After dissociation, two additional enzymatic reactions on the tRNA convert PreQ1 to queuine (Q), resulting in the hypermodified nucleoside queuosine (7-(((4,5-cis-dihydroxy-2-cyclopenten-1-yl)amino)methyl)-7-deazaguanosine). This chain is Queuine tRNA-ribosyltransferase, found in Rickettsia prowazekii (strain Madrid E).